The sequence spans 152 residues: Ribosomal RNA large subunit methyltransferase H (152 aa).

S-adenosyl-L-methionine is bound by residues Leu-69, Gly-96, and 118 to 123 (FGKLTF).

This sequence belongs to the RNA methyltransferase RlmH family. In terms of assembly, homodimer.

The protein localises to the cytoplasm. The enzyme catalyses pseudouridine(1915) in 23S rRNA + S-adenosyl-L-methionine = N(3)-methylpseudouridine(1915) in 23S rRNA + S-adenosyl-L-homocysteine + H(+). In terms of biological role, specifically methylates the pseudouridine at position 1915 (m3Psi1915) in 23S rRNA. This is Ribosomal RNA large subunit methyltransferase H from Mesomycoplasma hyopneumoniae (strain 7448) (Mycoplasma hyopneumoniae).